The primary structure comprises 316 residues: 4-hydroxy-3-methylbut-2-enyl diphosphate reductase (316 aa).

Position 12 (C12) interacts with [4Fe-4S] cluster. 2 residues coordinate (2E)-4-hydroxy-3-methylbut-2-enyl diphosphate: H41 and H74. The dimethylallyl diphosphate site is built by H41 and H74. 2 residues coordinate isopentenyl diphosphate: H41 and H74. C96 provides a ligand contact to [4Fe-4S] cluster. Residue H124 coordinates (2E)-4-hydroxy-3-methylbut-2-enyl diphosphate. H124 is a binding site for dimethylallyl diphosphate. H124 contacts isopentenyl diphosphate. E126 serves as the catalytic Proton donor. Residue T167 participates in (2E)-4-hydroxy-3-methylbut-2-enyl diphosphate binding. Residue C197 participates in [4Fe-4S] cluster binding. The (2E)-4-hydroxy-3-methylbut-2-enyl diphosphate site is built by S225, S226, N227, and S269. 4 residues coordinate dimethylallyl diphosphate: S225, S226, N227, and S269. 4 residues coordinate isopentenyl diphosphate: S225, S226, N227, and S269.

Belongs to the IspH family. Homodimer. The cofactor is [4Fe-4S] cluster.

It carries out the reaction isopentenyl diphosphate + 2 oxidized [2Fe-2S]-[ferredoxin] + H2O = (2E)-4-hydroxy-3-methylbut-2-enyl diphosphate + 2 reduced [2Fe-2S]-[ferredoxin] + 2 H(+). The catalysed reaction is dimethylallyl diphosphate + 2 oxidized [2Fe-2S]-[ferredoxin] + H2O = (2E)-4-hydroxy-3-methylbut-2-enyl diphosphate + 2 reduced [2Fe-2S]-[ferredoxin] + 2 H(+). The protein operates within isoprenoid biosynthesis; dimethylallyl diphosphate biosynthesis; dimethylallyl diphosphate from (2E)-4-hydroxy-3-methylbutenyl diphosphate: step 1/1. It functions in the pathway isoprenoid biosynthesis; isopentenyl diphosphate biosynthesis via DXP pathway; isopentenyl diphosphate from 1-deoxy-D-xylulose 5-phosphate: step 6/6. Functionally, catalyzes the conversion of 1-hydroxy-2-methyl-2-(E)-butenyl 4-diphosphate (HMBPP) into a mixture of isopentenyl diphosphate (IPP) and dimethylallyl diphosphate (DMAPP). Acts in the terminal step of the DOXP/MEP pathway for isoprenoid precursor biosynthesis. In Salmonella paratyphi B (strain ATCC BAA-1250 / SPB7), this protein is 4-hydroxy-3-methylbut-2-enyl diphosphate reductase.